Reading from the N-terminus, the 120-residue chain is Large ribosomal subunit protein bL19 (120 aa).

Belongs to the bacterial ribosomal protein bL19 family.

This protein is located at the 30S-50S ribosomal subunit interface and may play a role in the structure and function of the aminoacyl-tRNA binding site. The chain is Large ribosomal subunit protein bL19 from Dichelobacter nodosus (strain VCS1703A).